The chain runs to 131 residues: Small ribosomal subunit protein uS8 (131 aa).

It belongs to the universal ribosomal protein uS8 family. In terms of assembly, part of the 30S ribosomal subunit. Contacts proteins S5 and S12.

Its function is as follows. One of the primary rRNA binding proteins, it binds directly to 16S rRNA central domain where it helps coordinate assembly of the platform of the 30S subunit. This is Small ribosomal subunit protein uS8 from Prosthecochloris aestuarii (strain DSM 271 / SK 413).